The chain runs to 141 residues: Large ribosomal subunit protein uL13 (141 aa).

It belongs to the universal ribosomal protein uL13 family. In terms of assembly, part of the 50S ribosomal subunit.

Its function is as follows. This protein is one of the early assembly proteins of the 50S ribosomal subunit, although it is not seen to bind rRNA by itself. It is important during the early stages of 50S assembly. In Helicobacter pylori (strain P12), this protein is Large ribosomal subunit protein uL13.